Consider the following 276-residue polypeptide: Large ribosomal subunit protein uL2 (276 aa).

The disordered stretch occupies residues 211 to 276 (RNRHRGIRPQ…KLIISRRKGK (66 aa)). The segment covering 230–240 (DHPHGGGEGKK) has biased composition (basic and acidic residues).

Belongs to the universal ribosomal protein uL2 family. Part of the 50S ribosomal subunit. Forms a bridge to the 30S subunit in the 70S ribosome.

In terms of biological role, one of the primary rRNA binding proteins. Required for association of the 30S and 50S subunits to form the 70S ribosome, for tRNA binding and peptide bond formation. It has been suggested to have peptidyltransferase activity; this is somewhat controversial. Makes several contacts with the 16S rRNA in the 70S ribosome. The protein is Large ribosomal subunit protein uL2 of Campylobacter jejuni subsp. doylei (strain ATCC BAA-1458 / RM4099 / 269.97).